We begin with the raw amino-acid sequence, 240 residues long: Aquaporin SIP1-1 (240 aa).

The next 2 helical transmembrane spans lie at 13 to 33 and 44 to 64; these read LMTF…AAII and APLV…TVIF. The NPA 1 signature appears at 70-72; the sequence is NPT. The next 3 helical transmembrane spans lie at 89-109, 132-152, and 163-183; these read SLAI…LAIM, GAIA…LIIL, and FLLA…TGPA. Residues 185–187 carry the NPA 2 motif; it reads NPA. Residues 203–223 form a helical membrane-spanning segment; it reads DHIYVYWISSFVGALSAALLF.

This sequence belongs to the MIP/aquaporin (TC 1.A.8) family. SIP (TC 1.A.8.10) subfamily. Expressed in roots and above ground. Expressed in elongating regions of the root tips, trichome cells of the rosette leaves, vascular tissues of the flower petals, stigma, stamens (anthers and filaments), pollen and the top and bottom (receptacle) of siliques.

The protein resides in the endoplasmic reticulum membrane. Functionally, water channel required to facilitate the transport of water across cell membrane. The chain is Aquaporin SIP1-1 (SIP1-1) from Arabidopsis thaliana (Mouse-ear cress).